The sequence spans 268 residues: Transcription initiation factor TFIID subunit 14b (268 aa).

A compositionally biased stretch (polar residues) spans 1–20 (MTNSSSSKKQAQDQPETSEP). The tract at residues 1-36 (MTNSSSSKKQAQDQPETSEPTLKSLKTKMTKSDEKQ) is disordered. In terms of domain architecture, YEATS spans 38–182 (KLKDIEISVP…ESFLARVQNH (145 aa)). Residues 229–263 (DELLQLAAARQQVQAHIAKLRRQISLLEGQNQTVK) adopt a coiled-coil conformation.

Belongs to the YAF9 family. In terms of assembly, component of the TFIID complex. TFIID is composed of TATA binding protein (TBP) and a number of TBP-associated factors (TAFs) whose MWs range from 14-217 kDa. Interacts with TAF1, TAF4B and TAF12B. Component of the SWR1 chromatin-remodeling complex. Interacts with FLX, a component of the transcription activator complex FRI-C. Interacts with SWC4, and with EAF1A and EAF1B (via HSA domain). Expressed in roots, leaves, inflorescence and flowering tissues.

Its subcellular location is the cytoplasm. The protein resides in the nucleus. Negative regulator of flowering controlling the H4K5 acetylation levels in the FLC and FT chromatin. Positively regulates FLC expression. Component of the transcription factor IID (TFIID) complex that is essential for mediating regulation of RNA polymerase transcription. Component of the SWR1 complex which mediates the ATP-dependent exchange of histone H2A for the H2A variant HZT1 leading to transcriptional regulation of selected genes by chromatin remodeling. Component of a NuA4 histone acetyltransferase complex which is involved in transcriptional activation of selected genes principally by acetylation of nucleosomal histones H4 and H2A. In Arabidopsis thaliana (Mouse-ear cress), this protein is Transcription initiation factor TFIID subunit 14b.